We begin with the raw amino-acid sequence, 195 residues long: MEKFTIHTGTAVPLRLSNVDTDQIIPAVHLKRVTRTGFADALFSSWREDQAFVLNDESYSGASILVAGPEFGTGSSREHAVWALRDWGFRVVIAPRFGDIFRGNALKGGLLPVELELKAIEEIWGRIEADPSTSITVDLAARQVQVGGVNWGFPLDEFSRWRLMEGLDDIGLTLRHEPLIGAFEASRQPFLPTIA.

Belongs to the LeuD family. LeuD type 1 subfamily. In terms of assembly, heterodimer of LeuC and LeuD.

The enzyme catalyses (2R,3S)-3-isopropylmalate = (2S)-2-isopropylmalate. It functions in the pathway amino-acid biosynthesis; L-leucine biosynthesis; L-leucine from 3-methyl-2-oxobutanoate: step 2/4. In terms of biological role, catalyzes the isomerization between 2-isopropylmalate and 3-isopropylmalate, via the formation of 2-isopropylmaleate. In Salinispora tropica (strain ATCC BAA-916 / DSM 44818 / JCM 13857 / NBRC 105044 / CNB-440), this protein is 3-isopropylmalate dehydratase small subunit.